A 182-amino-acid polypeptide reads, in one-letter code: Large ribosomal subunit protein uL5 (182 aa).

The protein belongs to the universal ribosomal protein uL5 family. As to quaternary structure, part of the 50S ribosomal subunit; part of the 5S rRNA/L5/L18/L25 subcomplex. Contacts the 5S rRNA and the P site tRNA. Forms a bridge to the 30S subunit in the 70S ribosome.

This is one of the proteins that bind and probably mediate the attachment of the 5S RNA into the large ribosomal subunit, where it forms part of the central protuberance. In the 70S ribosome it contacts protein S13 of the 30S subunit (bridge B1b), connecting the 2 subunits; this bridge is implicated in subunit movement. Contacts the P site tRNA; the 5S rRNA and some of its associated proteins might help stabilize positioning of ribosome-bound tRNAs. This Thermus thermophilus (strain ATCC BAA-163 / DSM 7039 / HB27) protein is Large ribosomal subunit protein uL5.